We begin with the raw amino-acid sequence, 431 residues long: Cytochrome c oxidase subunit 3 (431 aa).

7 consecutive transmembrane segments (helical) span residues 70-90, 96-116, 132-152, 176-196, 321-341, 356-376, and 408-428; these read IAPL…FGVI, FVIA…SIVF, LVMG…SFFW, VYSY…SGAI, LYFT…EYYF, FLLT…IGII, and LFYW…IYWW.

This sequence belongs to the cytochrome c oxidase subunit 3 family. As to quaternary structure, component of the cytochrome c oxidase (complex IV, CIV), a multisubunit enzyme composed of a catalytic core of 3 subunits and several supernumerary subunits. The complex exists as a monomer or a dimer and forms supercomplexes (SCs) in the inner mitochondrial membrane with ubiquinol-cytochrome c oxidoreductase (cytochrome b-c1 complex, complex III, CIII).

Its subcellular location is the mitochondrion inner membrane. The enzyme catalyses 4 Fe(II)-[cytochrome c] + O2 + 8 H(+)(in) = 4 Fe(III)-[cytochrome c] + 2 H2O + 4 H(+)(out). Functionally, component of the cytochrome c oxidase, the last enzyme in the mitochondrial electron transport chain which drives oxidative phosphorylation. The respiratory chain contains 3 multisubunit complexes succinate dehydrogenase (complex II, CII), ubiquinol-cytochrome c oxidoreductase (cytochrome b-c1 complex, complex III, CIII) and cytochrome c oxidase (complex IV, CIV), that cooperate to transfer electrons derived from NADH and succinate to molecular oxygen, creating an electrochemical gradient over the inner membrane that drives transmembrane transport and the ATP synthase. Cytochrome c oxidase is the component of the respiratory chain that catalyzes the reduction of oxygen to water. Electrons originating from reduced cytochrome c in the intermembrane space (IMS) are transferred via the dinuclear copper A center (CU(A)) of subunit 2 and heme A of subunit 1 to the active site in subunit 1, a binuclear center (BNC) formed by heme A3 and copper B (CU(B)). The BNC reduces molecular oxygen to 2 water molecules using 4 electrons from cytochrome c in the IMS and 4 protons from the mitochondrial matrix. This Dictyostelium citrinum (Slime mold) protein is Cytochrome c oxidase subunit 3 (cox3).